The sequence spans 1402 residues: Eukaryotic translation initiation factor 4 gamma 1 (1402 aa).

2 disordered regions span residues 1–123 (MSGA…SPEP) and 165–402 (HEPN…YEYK). 2 positions are modified to phosphothreonine: threonine 11 and threonine 27. Residues 53 to 64 (GPEHSPSESQPS) show a composition bias toward low complexity. The span at 65-76 (SPSPTPSPPPIL) shows a compositional bias: pro residues. Serine 120 carries the phosphoserine modification. Residues 238–251 (ASATPPAVPSATPA) show a composition bias toward low complexity. Residues 261–275 (QEEEGEEEEEEEEGE) are compositionally biased toward acidic residues. 2 stretches are compositionally biased toward basic and acidic residues: residues 280–290 (ESDKGGEDLHP) and 324–340 (KELNKKEAVGDLLDAFK). A compositionally biased stretch (low complexity) spans 359-370 (PTPESEGSSGPS). Residues 379-388 (WDAKEDKIHN) show a composition bias toward basic and acidic residues. Position 452 is a phosphothreonine (threonine 452). Disordered stretches follow at residues 476 to 517 (ANLG…PPKG), 536 to 563 (AEKAWKPSSKRTAADKDRGEEDADGSKT), 600 to 636 (SKGSLTSSLRRPFQNPTSQWPSQHVPLPHGAESATTE), and 828 to 1028 (MAKG…KREA). The segment covering 479–488 (GRPALSSRGP) has biased composition (low complexity). 2 positions are modified to omega-N-methylarginine: arginine 490 and arginine 499. Basic and acidic residues predominate over residues 547-563 (TAADKDRGEEDADGSKT). The MIF4G domain maps to 567–793 (FRRVRSILNK…QDVLDLRQSN (227 aa)). Positions 602-621 (GSLTSSLRRPFQNPTSQWPS) are enriched in polar residues. The residue at position 832 (serine 832) is a Phosphoserine. Residues arginine 836 and arginine 846 each carry the omega-N-methylarginine modification. Residues serine 881 and serine 896 each carry the phosphoserine modification. Residues 892–913 (GGRLSWGKGSSGSGAKPSDAAS) are compositionally biased toward low complexity. Residue lysine 899 is modified to N6-acetyllysine. A compositionally biased stretch (polar residues) spans 918 to 937 (PATSTLNRFSALQQAVPTES). Phosphoserine is present on residues serine 948 and serine 950. The span at 949–981 (LSRERGGKAGEPRRRLERSERGGDRGDRLDRAR) shows a compositional bias: basic and acidic residues. Residue serine 988 is modified to Phosphoserine; by PKC/PRKCA. Over residues 989–1028 (FSKEVEERSRERPSQPEGLRKAASLTEDRDRGRDAAKREA) the composition is skewed to basic and acidic residues. 3 positions are modified to phosphoserine: serine 990, serine 997, and serine 1012. Position 1014 is a phosphothreonine (threonine 1014). Residues serine 1034 and serine 1041 each carry the phosphoserine modification. Residues 1044–1166 (ELEKKSKAII…PMGELFREIT (123 aa)) enclose the MI domain. Residues 1231-1401 (EESEAPGQRA…REVEEEESDH (171 aa)) enclose the W2 domain. At serine 1399 the chain carries Phosphoserine.

The protein belongs to the eukaryotic initiation factor 4G family. EIF4F is a multi-subunit complex, the composition of which varies with external and internal environmental conditions. It is composed of at least EIF4A, EIF4E (cap-binding) and EIF4G1/EIF4G3. Interacts with eIF3 complex, mutually exclusive with EIF4A1 or EIF4A2, EIF4E and through its N-terminus with PABPC1. Interacts with EIF4E or with EIF1 (mutually exclusive) through a common binding site. Interacts through its C-terminus with the serine/threonine kinases MKNK1, and with MKNK2. Appears to act as a scaffold protein, holding these enzymes in place to phosphorylate EIF4E. Non-phosphorylated EIF4EBP1 competes with EIF4G1/EIF4G3 to interact with EIF4E; insulin stimulated MAP-kinase (MAPK1 and MAPK3) phosphorylation of EIF4EBP1 causes dissociation of the complex allowing EIF4G1/EIF4G3 to bind and consequent initiation of translation. EIF4G1/EIF4G3 interacts with PABPC1 to bring about circularization of the mRNA. Interacts with EIF4E3. Interacts with CIRBP and MIF4GD. Interacts with RBM4. Interacts with HNRNPD/AUF1; the interaction requires RNA. Interacts with DDX3X; the interaction requires RNA. Interacts with DAZAP2. Phosphorylated at multiple sites in vivo. Phosphorylation at Ser-988 by PRKCA induces binding to MKNK1.

It is found in the cytoplasm. The protein resides in the nucleus. Its subcellular location is the stress granule. In terms of biological role, component of the protein complex eIF4F, which is involved in the recognition of the mRNA cap, ATP-dependent unwinding of 5'-terminal secondary structure and recruitment of mRNA to the ribosome. Exists in two complexes, either with EIF1 or with EIF4E (mutually exclusive). Together with EIF1, is required for leaky scanning, in particular for avoiding cap-proximal start codon. Together with EIF4E, antagonizes the scanning promoted by EIF1-EIF4G1 and locates the start codon (through a TISU element) without scanning. As a member of the eIF4F complex, required for endoplasmic reticulum stress-induced ATF4 mRNA translation. This is Eukaryotic translation initiation factor 4 gamma 1 (EIF4G1) from Oryctolagus cuniculus (Rabbit).